The sequence spans 403 residues: Alkaline protease 1 (403 aa).

An N-terminal signal peptide occupies residues 1-21; it reads MHSFKRSLLLLGALLPAVFGA. Residues 22–124 constitute a propeptide that is removed on maturation; the sequence is PVEPRRAAEK…QIWYIDALTS (103 aa). Residues 35–119 enclose the Inhibitor I9 domain; sequence KYIVTFKSGL…HVEEDQIWYI (85 aa). Residues 129–403 form the Peptidase S8 domain; sequence PWGLGAISHK…NLLAYNGADE (275 aa). Active-site charge relay system residues include Asp-161 and His-192. An N-linked (GlcNAc...) asparagine glycan is attached at Asn-252. Ser-348 functions as the Charge relay system in the catalytic mechanism.

The protein belongs to the peptidase S8 family.

Its subcellular location is the secreted. It catalyses the reaction Hydrolysis of proteins with broad specificity, and of Bz-Arg-OEt &gt; Ac-Tyr-OEt. Does not hydrolyze peptide amides.. In terms of biological role, secreted alkaline protease that allows assimilation of proteinaceous substrates. The chain is Alkaline protease 1 (alp1) from Emericella nidulans (strain FGSC A4 / ATCC 38163 / CBS 112.46 / NRRL 194 / M139) (Aspergillus nidulans).